The primary structure comprises 732 residues: Aldehyde oxidoreductase molybdenum-binding subunit PaoC (732 aa).

Mo-molybdopterin cytosine dinucleotide is bound by residues 241-242 (GF), 468-470 (IGT), 511-512 (GA), 615-621 (RILNPKT), Q625, and 688-691 (KGVG). E692 (proton acceptor) is an active-site residue.

It belongs to the xanthine dehydrogenase family. In terms of assembly, heterotrimer composed of PaoA, PaoB and PaoC. Mo-molybdopterin cytosine dinucleotide is required as a cofactor.

The protein resides in the periplasm. The catalysed reaction is an aldehyde + A + H2O = a carboxylate + AH2 + H(+). Its function is as follows. Oxidizes aldehydes to the corresponding carboxylic acids with a preference for aromatic aldehydes. It might play a role in the detoxification of aldehydes to avoid cell damage. This chain is Aldehyde oxidoreductase molybdenum-binding subunit PaoC, found in Escherichia coli O157:H7.